The primary structure comprises 259 residues: Tryptophan synthase alpha chain (259 aa).

Active-site proton acceptor residues include E52 and D63.

Belongs to the TrpA family. As to quaternary structure, tetramer of two alpha and two beta chains.

The enzyme catalyses (1S,2R)-1-C-(indol-3-yl)glycerol 3-phosphate + L-serine = D-glyceraldehyde 3-phosphate + L-tryptophan + H2O. The protein operates within amino-acid biosynthesis; L-tryptophan biosynthesis; L-tryptophan from chorismate: step 5/5. In terms of biological role, the alpha subunit is responsible for the aldol cleavage of indoleglycerol phosphate to indole and glyceraldehyde 3-phosphate. This Streptococcus sanguinis (strain SK36) protein is Tryptophan synthase alpha chain.